Consider the following 293-residue polypeptide: DOMON domain-containing protein FRRS1L (293 aa).

The N-terminal stretch at 1 to 28 is a signal peptide; that stretch reads MARPPRQHPGVWASLLLLLLTGPAACAA. Positions 29–61 are disordered; the sequence is SPADDGAGPGGRGPRGRARGDTGADEAVPRHDS. Over residues 46–61 the composition is skewed to basic and acidic residues; it reads ARGDTGADEAVPRHDS. The 116-residue stretch at 119–234 folds into the DOMON domain; sequence CDYFLSYRMI…WYYLFAWGPA (116 aa). A helical transmembrane segment spans residues 271–291; that stretch reads TFSSPFCLLLIVALTFYLLMG.

In terms of assembly, component of the outer core of AMPAR complex. AMPAR complex consists of an inner core made of 4 pore-forming GluA/GRIA proteins (GRIA1, GRIA2, GRIA3 and GRIA4) and 4 major auxiliary subunits arranged in a twofold symmetry. One of the two pairs of distinct binding sites is occupied either by CNIH2, CNIH3 or CACNG2, CACNG3. The other harbors CACNG2, CACNG3, CACNG4, CACNG8 or GSG1L. This inner core of AMPAR complex is complemented by outer core constituents binding directly to the GluA/GRIA proteins at sites distinct from the interaction sites of the inner core constituents. Outer core constituents include at least PRRT1, PRRT2, CKAMP44/SHISA9, FRRS1L and NRN1. The proteins of the inner and outer core serve as a platform for other, more peripherally associated AMPAR constituents. Alone or in combination, these auxiliary subunits control the gating and pharmacology of the AMPAR complex and profoundly impact their biogenesis and protein processing. As to expression, expressed in adult and fetal brain. Very weak expression in medulla, spinal cord and in adult ovary.

The protein localises to the cell membrane. Its subcellular location is the synapse. Functionally, important modulator of glutamate signaling pathway. This is DOMON domain-containing protein FRRS1L (FRRS1L) from Homo sapiens (Human).